The chain runs to 304 residues: tRNA dimethylallyltransferase (304 aa).

Residue 9–16 participates in ATP binding; sequence APTAAGKS. Position 11-16 (11-16) interacts with substrate; sequence TAAGKS.

This sequence belongs to the IPP transferase family. Monomer. Mg(2+) serves as cofactor.

The enzyme catalyses adenosine(37) in tRNA + dimethylallyl diphosphate = N(6)-dimethylallyladenosine(37) in tRNA + diphosphate. Catalyzes the transfer of a dimethylallyl group onto the adenine at position 37 in tRNAs that read codons beginning with uridine, leading to the formation of N6-(dimethylallyl)adenosine (i(6)A). The protein is tRNA dimethylallyltransferase of Deinococcus geothermalis (strain DSM 11300 / CIP 105573 / AG-3a).